The following is a 372-amino-acid chain: Maltose/maltodextrin import ATP-binding protein MalK (372 aa).

In terms of domain architecture, ABC transporter spans 4–234 (VSLRNVGKSY…PANRFVAGFI (231 aa)). 36–43 (GPSGCGKS) is a binding site for ATP.

The protein belongs to the ABC transporter superfamily. Maltooligosaccharide importer (TC 3.A.1.1.1) family. In terms of assembly, the complex is composed of two ATP-binding proteins (MalK), two transmembrane proteins (MalG and MalK) and a solute-binding protein (MalE).

The protein localises to the cell inner membrane. It carries out the reaction D-maltose(out) + ATP + H2O = D-maltose(in) + ADP + phosphate + H(+). Its function is as follows. Part of the ABC transporter complex MalEFGK involved in maltose/maltodextrin import. Responsible for energy coupling to the transport system. This Mannheimia succiniciproducens (strain KCTC 0769BP / MBEL55E) protein is Maltose/maltodextrin import ATP-binding protein MalK.